We begin with the raw amino-acid sequence, 313 residues long: Protein FixB (313 aa).

An FAD-binding site is contributed by 255–283 (LYLAVGISGQIQHMVGANASQTIFAINKD).

This sequence belongs to the ETF alpha-subunit/FixB family. In terms of assembly, heterodimer of FixA and FixB.

It participates in amine and polyamine metabolism; carnitine metabolism. Its function is as follows. Required for anaerobic carnitine reduction. May bring reductant to CaiA. This Escherichia coli (strain 55989 / EAEC) protein is Protein FixB.